The following is a 103-amino-acid chain: Co-chaperonin GroES (103 aa).

Belongs to the GroES chaperonin family. As to quaternary structure, heptamer of 7 subunits arranged in a ring. Interacts with the chaperonin GroEL.

The protein resides in the cytoplasm. Its function is as follows. Together with the chaperonin GroEL, plays an essential role in assisting protein folding. The GroEL-GroES system forms a nano-cage that allows encapsulation of the non-native substrate proteins and provides a physical environment optimized to promote and accelerate protein folding. GroES binds to the apical surface of the GroEL ring, thereby capping the opening of the GroEL channel. The chain is Co-chaperonin GroES from Dinoroseobacter shibae (strain DSM 16493 / NCIMB 14021 / DFL 12).